Consider the following 313-residue polypeptide: Pantoate--beta-alanine ligase (313 aa).

36-43 (MGYLHQGH) lines the ATP pocket. His43 acts as the Proton donor in catalysis. Position 71 (Gln71) interacts with (R)-pantoate. Gln71 contacts beta-alanine. 178–181 (GKKD) contributes to the ATP binding site. Gln184 is a binding site for (R)-pantoate. 215–218 (MSSR) contacts ATP.

The protein belongs to the pantothenate synthetase family. In terms of assembly, homodimer.

It localises to the cytoplasm. It is found in the cytosol. It catalyses the reaction (R)-pantoate + beta-alanine + ATP = (R)-pantothenate + AMP + diphosphate + H(+). It participates in cofactor biosynthesis; (R)-pantothenate biosynthesis; (R)-pantothenate from (R)-pantoate and beta-alanine: step 1/1. Its function is as follows. Catalyzes the condensation of pantoate with beta-alanine to form pantothenate. Essential for panthotenate biosynthesis. The polypeptide is Pantoate--beta-alanine ligase (PANC) (Oryza sativa subsp. japonica (Rice)).